The following is a 92-amino-acid chain: MARVTVEDAVEQIGNRFDMILVAARRARQIAVQGKDPMVEEMNDKPTVIALREIELGLVNAHTLDADERQTVREREAAEIAAVSAIAEGRSL.

It belongs to the RNA polymerase subunit omega family. As to quaternary structure, the RNAP catalytic core consists of 2 alpha, 1 beta, 1 beta' and 1 omega subunit. When a sigma factor is associated with the core the holoenzyme is formed, which can initiate transcription.

It catalyses the reaction RNA(n) + a ribonucleoside 5'-triphosphate = RNA(n+1) + diphosphate. Functionally, promotes RNA polymerase assembly. Latches the N- and C-terminal regions of the beta' subunit thereby facilitating its interaction with the beta and alpha subunits. This chain is DNA-directed RNA polymerase subunit omega, found in Shewanella baltica (strain OS223).